An 83-amino-acid polypeptide reads, in one-letter code: uncharacterized protein (83 aa).

This is an uncharacterized protein from Rickettsia prowazekii (strain Madrid E).